The following is a 350-amino-acid chain: MFMASSLPVFIFLLSLPHGLTFNCTNSGVCIEKMKQHRTEYLKNEILDQLNMKEAPKGLKPMDPEMKSVYLEMYRDLLEKDEQDMGVEMSFYTAKDPSYGENPSQLVAKFDVTNDLERSDILQATLTVSIEIPAKDSGMLQDVQVQVYEKNEDGSMGEMVTSGIFATKGSERISIQLPIDTVKSWFTISPIQGIFVKAMLDGRNVALHPQQTTADVDNMRLQLSTRPKGSRKRRSHAKPVCNAEAQSKGCCLYDLEIEFEKIGWDWIVAPPRYNAYMCRGDCHYNAHHFNLAETGHSKIMRAAHKVSNPEIGYCCHPTEYDYIKLIYVNRDGRVSIANVNGMIAKKCGCS.

The signal sequence occupies residues 1–21; the sequence is MFMASSLPVFIFLLSLPHGLT. A propeptide spanning residues 22 to 234 is cleaved from the precursor; it reads FNCTNSGVCI…TRPKGSRKRR (213 aa). The N-linked (GlcNAc...) asparagine glycan is linked to N23. 4 disulfide bridges follow: C241-C251, C250-C315, C278-C347, and C282-C349.

This sequence belongs to the TGF-beta family. As to expression, expressed in the chemosensory neurons, including in the ASJ neurons in males. Expressed in the ASI neurons.

Its subcellular location is the secreted. In terms of biological role, under harsh environmental conditions, larvae enter a developmentally arrested state known as dauer; TGF-beta-like daf-7 acts to inhibit dauer larva formation and promote growth. May be a ligand to cell surface receptor daf-4. May act as a negative regulator of dauer larva development by transducing chemosensory information from ASI neurons. Involved in sensitivity to CO2 levels. Involved in mate searching behavior of males, acting in concert with the neuropeptide pdf-1. In AWC neurons, acts to promote expression of srsx-3, a member of the GPCR family. This Caenorhabditis elegans protein is Dauer larva development regulatory growth factor daf-7.